A 355-amino-acid chain; its full sequence is Peptide chain release factor 1 (355 aa).

N5-methylglutamine is present on glutamine 233.

It belongs to the prokaryotic/mitochondrial release factor family. Methylated by PrmC. Methylation increases the termination efficiency of RF1.

The protein resides in the cytoplasm. Its function is as follows. Peptide chain release factor 1 directs the termination of translation in response to the peptide chain termination codons UAG and UAA. The sequence is that of Peptide chain release factor 1 from Desulfitobacterium hafniense (strain DSM 10664 / DCB-2).